The sequence spans 120 residues: MPFAQPPDYSKSVFPIAVGIAVAVVLFTLTRSTLPQVGDNIHNLPHGGNYQDGTKRISYCGPRDSFPSSSLISSGTPMIIGIIIFLIFAIYVSEKWSRSGSRRCSCCVPGAPACTATVHE.

The Cytoplasmic segment spans residues 1 to 8; it reads MPFAQPPD. The helical transmembrane segment at 9–29 threads the bilayer; that stretch reads YSKSVFPIAVGIAVAVVLFTL. Residues 30-71 lie on the Lumenal side of the membrane; it reads TRSTLPQVGDNIHNLPHGGNYQDGTKRISYCGPRDSFPSSSL. The chain crosses the membrane as a helical span at residues 72 to 92; that stretch reads ISSGTPMIIGIIIFLIFAIYV. The Cytoplasmic segment spans residues 93–120; it reads SEKWSRSGSRRCSCCVPGAPACTATVHE.

Belongs to the Tymovirales TGBp2 protein family.

Its subcellular location is the host endoplasmic reticulum membrane. Its function is as follows. Plays a role in viral cell-to-cell propagation, by facilitating genome transport to neighboring plant cells through plasmosdesmata,. The protein is Movement protein TGB2 of Crataegus (hawthorn).